The following is a 269-amino-acid chain: Tetrahydromethanopterin S-methyltransferase subunit C (269 aa).

A run of 8 helical transmembrane segments spans residues 18-38 (VLVIGAVLSLIGMYIAHFVPS), 39-59 (LAMLLGGLLAAGACVAGANTT), 62-82 (VAAYGLGTGVPSIGMVSLGMG), 84-104 (ISALAGVLIPSVLAGSVALPF), 106-126 (LVLATPIIAAVVAIIVGFIVG), 152-172 (ALAILGFCTAFAGGFSADLII), 180-200 (IIALAFIAAGMSILHPFNACI), and 222-242 (LVFSIAKLDIVSILVAAVFWI).

The protein belongs to the MtrC family. In terms of assembly, the complex is composed of 8 subunits; MtrA, MtrB, MtrC, MtrD, MtrE, MtrF, MtrG and MtrH.

It localises to the cell membrane. The enzyme catalyses 5-methyl-5,6,7,8-tetrahydromethanopterin + coenzyme M + 2 Na(+)(in) = 5,6,7,8-tetrahydromethanopterin + methyl-coenzyme M + 2 Na(+)(out). The protein operates within one-carbon metabolism; methanogenesis from CO(2); methyl-coenzyme M from 5,10-methylene-5,6,7,8-tetrahydromethanopterin: step 2/2. Functionally, part of a complex that catalyzes the formation of methyl-coenzyme M and tetrahydromethanopterin from coenzyme M and methyl-tetrahydromethanopterin. This is an energy-conserving, sodium-ion translocating step. The sequence is that of Tetrahydromethanopterin S-methyltransferase subunit C from Methanococcus vannielii (strain ATCC 35089 / DSM 1224 / JCM 13029 / OCM 148 / SB).